Here is a 450-residue protein sequence, read N- to C-terminus: tRNA-2-methylthio-N(6)-dimethylallyladenosine synthase (450 aa).

Positions 14–132 (GEFFIETWGC…FPNYLNEVKK (119 aa)) constitute an MTTase N-terminal domain. [4Fe-4S] cluster is bound by residues cysteine 23, cysteine 59, cysteine 93, cysteine 169, cysteine 173, and cysteine 176. The Radical SAM core domain occupies 155–385 (RKNSMKAFVT…VEVVNEISAK (231 aa)). A TRAM domain is found at 388–450 (KAYEGKIEEV…NSFSLTGEEI (63 aa)).

This sequence belongs to the methylthiotransferase family. MiaB subfamily. As to quaternary structure, monomer. [4Fe-4S] cluster is required as a cofactor.

The protein resides in the cytoplasm. It catalyses the reaction N(6)-dimethylallyladenosine(37) in tRNA + (sulfur carrier)-SH + AH2 + 2 S-adenosyl-L-methionine = 2-methylsulfanyl-N(6)-dimethylallyladenosine(37) in tRNA + (sulfur carrier)-H + 5'-deoxyadenosine + L-methionine + A + S-adenosyl-L-homocysteine + 2 H(+). Functionally, catalyzes the methylthiolation of N6-(dimethylallyl)adenosine (i(6)A), leading to the formation of 2-methylthio-N6-(dimethylallyl)adenosine (ms(2)i(6)A) at position 37 in tRNAs that read codons beginning with uridine. The protein is tRNA-2-methylthio-N(6)-dimethylallyladenosine synthase of Clostridium botulinum (strain Okra / Type B1).